The sequence spans 259 residues: Ribonuclease PH (259 aa).

Residues arginine 88 and 126–128 contribute to the phosphate site; that span reads GTR.

It belongs to the RNase PH family. In terms of assembly, homohexameric ring arranged as a trimer of dimers.

The catalysed reaction is tRNA(n+1) + phosphate = tRNA(n) + a ribonucleoside 5'-diphosphate. Functionally, phosphorolytic 3'-5' exoribonuclease that plays an important role in tRNA 3'-end maturation. Removes nucleotide residues following the 3'-CCA terminus of tRNAs; can also add nucleotides to the ends of RNA molecules by using nucleoside diphosphates as substrates, but this may not be physiologically important. Probably plays a role in initiation of 16S rRNA degradation (leading to ribosome degradation) during starvation. In Mycobacterium bovis (strain BCG / Pasteur 1173P2), this protein is Ribonuclease PH.